The sequence spans 360 residues: 3-dehydroquinate synthase (360 aa).

NAD(+)-binding positions include 71–76, 105–109, 129–130, lysine 142, lysine 151, and 169–172; these read DGEQYK, GVVGD, TT, and TLNT. Glutamate 184, histidine 248, and histidine 265 together coordinate Zn(2+).

The protein belongs to the sugar phosphate cyclases superfamily. Dehydroquinate synthase family. Co(2+) is required as a cofactor. It depends on Zn(2+) as a cofactor. The cofactor is NAD(+).

The protein resides in the cytoplasm. The catalysed reaction is 7-phospho-2-dehydro-3-deoxy-D-arabino-heptonate = 3-dehydroquinate + phosphate. The protein operates within metabolic intermediate biosynthesis; chorismate biosynthesis; chorismate from D-erythrose 4-phosphate and phosphoenolpyruvate: step 2/7. In terms of biological role, catalyzes the conversion of 3-deoxy-D-arabino-heptulosonate 7-phosphate (DAHP) to dehydroquinate (DHQ). This chain is 3-dehydroquinate synthase, found in Coxiella burnetii (strain CbuG_Q212) (Coxiella burnetii (strain Q212)).